A 77-amino-acid chain; its full sequence is Small ribosomal subunit protein bS20 (77 aa).

Belongs to the bacterial ribosomal protein bS20 family.

Binds directly to 16S ribosomal RNA. This chain is Small ribosomal subunit protein bS20, found in Streptococcus agalactiae serotype Ia (strain ATCC 27591 / A909 / CDC SS700).